Consider the following 291-residue polypeptide: N-acetylmannosamine kinase (291 aa).

ATP contacts are provided by residues 5–12 (AIDIGGTK) and 132–139 (GVGGGVVS). 4 residues coordinate Zn(2+): histidine 156, cysteine 166, cysteine 168, and cysteine 173.

Belongs to the ROK (NagC/XylR) family. NanK subfamily. Homodimer.

It catalyses the reaction an N-acyl-D-mannosamine + ATP = an N-acyl-D-mannosamine 6-phosphate + ADP + H(+). Its pathway is amino-sugar metabolism; N-acetylneuraminate degradation; D-fructose 6-phosphate from N-acetylneuraminate: step 2/5. Functionally, catalyzes the phosphorylation of N-acetylmannosamine (ManNAc) to ManNAc-6-P. The sequence is that of N-acetylmannosamine kinase from Escherichia coli O7:K1 (strain IAI39 / ExPEC).